Consider the following 548-residue polypeptide: Chaperonin GroEL (548 aa).

ATP is bound by residues 30 to 33 (TLGP), Lys-51, 87 to 91 (DGTTT), Gly-415, 479 to 481 (NAA), and Asp-495.

The protein belongs to the chaperonin (HSP60) family. As to quaternary structure, forms a cylinder of 14 subunits composed of two heptameric rings stacked back-to-back. Interacts with the co-chaperonin GroES.

It localises to the cytoplasm. The enzyme catalyses ATP + H2O + a folded polypeptide = ADP + phosphate + an unfolded polypeptide.. Together with its co-chaperonin GroES, plays an essential role in assisting protein folding. The GroEL-GroES system forms a nano-cage that allows encapsulation of the non-native substrate proteins and provides a physical environment optimized to promote and accelerate protein folding. This chain is Chaperonin GroEL, found in Nitratidesulfovibrio vulgaris (strain DSM 19637 / Miyazaki F) (Desulfovibrio vulgaris).